The following is a 398-amino-acid chain: Isopenicillin N epimerase (398 aa).

Lys-219 is subject to N6-(pyridoxal phosphate)lysine. A disordered region spans residues 243–264 (PQVSWGYRPDGENPSDERNRFG). The segment covering 251-264 (PDGENPSDERNRFG) has biased composition (basic and acidic residues).

Belongs to the class-V pyridoxal-phosphate-dependent aminotransferase family. Pyridoxal 5'-phosphate is required as a cofactor.

The catalysed reaction is isopenicillin N = penicillin N. It functions in the pathway antibiotic biosynthesis; cephalosporin C biosynthesis. In terms of biological role, catalyzes the reversible isomerization between isopenicillin N and penicillin N. This Amycolatopsis lactamdurans (Nocardia lactamdurans) protein is Isopenicillin N epimerase (cefD).